The primary structure comprises 260 residues: Triosephosphate isomerase (260 aa).

11-13 (NWK) is a substrate binding site. H103 functions as the Electrophile in the catalytic mechanism. E175 functions as the Proton acceptor in the catalytic mechanism. Substrate contacts are provided by residues G181, S220, and 241–242 (GG).

It belongs to the triosephosphate isomerase family. In terms of assembly, homodimer.

The protein localises to the cytoplasm. The catalysed reaction is D-glyceraldehyde 3-phosphate = dihydroxyacetone phosphate. The protein operates within carbohydrate biosynthesis; gluconeogenesis. It participates in carbohydrate degradation; glycolysis; D-glyceraldehyde 3-phosphate from glycerone phosphate: step 1/1. In terms of biological role, involved in the gluconeogenesis. Catalyzes stereospecifically the conversion of dihydroxyacetone phosphate (DHAP) to D-glyceraldehyde-3-phosphate (G3P). The polypeptide is Triosephosphate isomerase (Shewanella sp. (strain MR-7)).